The sequence spans 369 residues: 4-hydroxy-3-methylbut-2-en-1-yl diphosphate synthase (flavodoxin) (369 aa).

Cys-270, Cys-273, Cys-305, and Glu-312 together coordinate [4Fe-4S] cluster.

Belongs to the IspG family. The cofactor is [4Fe-4S] cluster.

The enzyme catalyses (2E)-4-hydroxy-3-methylbut-2-enyl diphosphate + oxidized [flavodoxin] + H2O + 2 H(+) = 2-C-methyl-D-erythritol 2,4-cyclic diphosphate + reduced [flavodoxin]. The protein operates within isoprenoid biosynthesis; isopentenyl diphosphate biosynthesis via DXP pathway; isopentenyl diphosphate from 1-deoxy-D-xylulose 5-phosphate: step 5/6. Functionally, converts 2C-methyl-D-erythritol 2,4-cyclodiphosphate (ME-2,4cPP) into 1-hydroxy-2-methyl-2-(E)-butenyl 4-diphosphate. The chain is 4-hydroxy-3-methylbut-2-en-1-yl diphosphate synthase (flavodoxin) from Pseudomonas putida (strain W619).